The primary structure comprises 456 residues: tRNA-2-methylthio-N(6)-dimethylallyladenosine synthase (456 aa).

In terms of domain architecture, MTTase N-terminal spans 2-119; the sequence is KKVFIKTYGC…LPDLIAARRR (118 aa). [4Fe-4S] cluster is bound by residues C11, C48, C82, C156, C160, and C163. In terms of domain architecture, Radical SAM core spans 142–375; that stretch reads RVDGASAYVS…QATIEENVAR (234 aa). The TRAM domain maps to 378 to 448; it reads QGMVGSVQRI…PHSLRGEVAE (71 aa).

The protein belongs to the methylthiotransferase family. MiaB subfamily. In terms of assembly, monomer. It depends on [4Fe-4S] cluster as a cofactor.

It localises to the cytoplasm. The catalysed reaction is N(6)-dimethylallyladenosine(37) in tRNA + (sulfur carrier)-SH + AH2 + 2 S-adenosyl-L-methionine = 2-methylsulfanyl-N(6)-dimethylallyladenosine(37) in tRNA + (sulfur carrier)-H + 5'-deoxyadenosine + L-methionine + A + S-adenosyl-L-homocysteine + 2 H(+). In terms of biological role, catalyzes the methylthiolation of N6-(dimethylallyl)adenosine (i(6)A), leading to the formation of 2-methylthio-N6-(dimethylallyl)adenosine (ms(2)i(6)A) at position 37 in tRNAs that read codons beginning with uridine. The polypeptide is tRNA-2-methylthio-N(6)-dimethylallyladenosine synthase (Ralstonia pickettii (strain 12J)).